Here is a 637-residue protein sequence, read N- to C-terminus: Biosynthetic arginine decarboxylase (637 aa).

K101 carries the post-translational modification N6-(pyridoxal phosphate)lysine. 286–296 (FDVGGGLAVDY) lines the substrate pocket.

This sequence belongs to the Orn/Lys/Arg decarboxylase class-II family. SpeA subfamily. It depends on Mg(2+) as a cofactor. Pyridoxal 5'-phosphate is required as a cofactor.

The enzyme catalyses L-arginine + H(+) = agmatine + CO2. The protein operates within amine and polyamine biosynthesis; agmatine biosynthesis; agmatine from L-arginine: step 1/1. Functionally, catalyzes the biosynthesis of agmatine from arginine. This is Biosynthetic arginine decarboxylase from Shewanella loihica (strain ATCC BAA-1088 / PV-4).